The following is a 201-amino-acid chain: Holliday junction branch migration complex subunit RuvA (201 aa).

Positions 1 to 63 (MIAYLSGVVR…EDAQLLFGFP (63 aa)) are domain I. The domain II stretch occupies residues 64–142 (DADHLKLFDL…EHLAAAASGA (79 aa)). Positions 143-150 (AGGKRPAR) are flexible linker. Positions 151–201 (VSSTAGHDAVDALLALGFREAQVRAAVAELLGADPEASADTLIRKALGRLR) are domain III.

Belongs to the RuvA family. Homotetramer. Forms an RuvA(8)-RuvB(12)-Holliday junction (HJ) complex. HJ DNA is sandwiched between 2 RuvA tetramers; dsDNA enters through RuvA and exits via RuvB. An RuvB hexamer assembles on each DNA strand where it exits the tetramer. Each RuvB hexamer is contacted by two RuvA subunits (via domain III) on 2 adjacent RuvB subunits; this complex drives branch migration. In the full resolvosome a probable DNA-RuvA(4)-RuvB(12)-RuvC(2) complex forms which resolves the HJ.

It is found in the cytoplasm. The RuvA-RuvB-RuvC complex processes Holliday junction (HJ) DNA during genetic recombination and DNA repair, while the RuvA-RuvB complex plays an important role in the rescue of blocked DNA replication forks via replication fork reversal (RFR). RuvA specifically binds to HJ cruciform DNA, conferring on it an open structure. The RuvB hexamer acts as an ATP-dependent pump, pulling dsDNA into and through the RuvAB complex. HJ branch migration allows RuvC to scan DNA until it finds its consensus sequence, where it cleaves and resolves the cruciform DNA. The sequence is that of Holliday junction branch migration complex subunit RuvA from Deinococcus radiodurans (strain ATCC 13939 / DSM 20539 / JCM 16871 / CCUG 27074 / LMG 4051 / NBRC 15346 / NCIMB 9279 / VKM B-1422 / R1).